The primary structure comprises 540 residues: Chaperonin GroEL (540 aa).

Residues 29 to 32 (TLGP), 86 to 90 (DGTTT), Gly-413, 476 to 478 (NAA), and Asp-492 contribute to the ATP site.

The protein belongs to the chaperonin (HSP60) family. As to quaternary structure, forms a cylinder of 14 subunits composed of two heptameric rings stacked back-to-back. Interacts with the co-chaperonin GroES.

The protein localises to the cytoplasm. It catalyses the reaction ATP + H2O + a folded polypeptide = ADP + phosphate + an unfolded polypeptide.. Its function is as follows. Together with its co-chaperonin GroES, plays an essential role in assisting protein folding. The GroEL-GroES system forms a nano-cage that allows encapsulation of the non-native substrate proteins and provides a physical environment optimized to promote and accelerate protein folding. This is Chaperonin GroEL from Tsukamurella paurometabola (Corynebacterium paurometabolum).